We begin with the raw amino-acid sequence, 216 residues long: Ribosomal RNA small subunit methyltransferase G (216 aa).

G75, L80, and R141 together coordinate S-adenosyl-L-methionine.

The protein belongs to the methyltransferase superfamily. RNA methyltransferase RsmG family.

The protein localises to the cytoplasm. It catalyses the reaction guanosine(527) in 16S rRNA + S-adenosyl-L-methionine = N(7)-methylguanosine(527) in 16S rRNA + S-adenosyl-L-homocysteine. Specifically methylates the N7 position of guanine in position 527 of 16S rRNA. The protein is Ribosomal RNA small subunit methyltransferase G of Nitrosospira multiformis (strain ATCC 25196 / NCIMB 11849 / C 71).